A 419-amino-acid polypeptide reads, in one-letter code: Serine/threonine-protein kinase Kist (419 aa).

The Protein kinase domain maps to 23–304 (WQVQSRLGSG…AEMALCSPFF (282 aa)). ATP is bound by residues 29-37 (LGSGSSASV) and lysine 54. Catalysis depends on proton acceptor residues aspartate 141 and aspartate 158. Positions 324 to 406 (RLLNVLDDDY…KFVVATFYPL (83 aa)) constitute an RRM domain.

This sequence belongs to the protein kinase superfamily. Ser/Thr protein kinase family. Interacts with stathmin and CDKN1B/p27Kip1 Interacts with PAM. As to expression, in the embryo, preferentially expressed in the developing nervous system.

The protein localises to the cytoplasm. It localises to the nucleus. The catalysed reaction is L-seryl-[protein] + ATP = O-phospho-L-seryl-[protein] + ADP + H(+). It catalyses the reaction L-threonyl-[protein] + ATP = O-phospho-L-threonyl-[protein] + ADP + H(+). In terms of biological role, upon serum stimulation, phosphorylates CDKN1B/p27Kip1, thus controlling CDKN1B subcellular location and cell cycle progression in G1 phase. May be involved in trafficking and/or processing of RNA. The protein is Serine/threonine-protein kinase Kist (Uhmk1) of Rattus norvegicus (Rat).